The chain runs to 146 residues: uncharacterized protein (146 aa).

This is an uncharacterized protein from Bacillus subtilis (strain 168).